Reading from the N-terminus, the 515-residue chain is 2-isopropylmalate synthase (515 aa).

The region spanning 5-268 is the Pyruvate carboxyltransferase domain; that stretch reads VIIFDTTLRD…VCGIDATQIV (264 aa). The Mn(2+) site is built by Asp-14, His-202, His-204, and Asn-239. Positions 394–515 are regulatory domain; that stretch reads KFISLSQHSE…QAKLNAQMTP (122 aa).

This sequence belongs to the alpha-IPM synthase/homocitrate synthase family. LeuA type 1 subfamily. In terms of assembly, homodimer. Mn(2+) serves as cofactor.

It localises to the cytoplasm. The enzyme catalyses 3-methyl-2-oxobutanoate + acetyl-CoA + H2O = (2S)-2-isopropylmalate + CoA + H(+). Its pathway is amino-acid biosynthesis; L-leucine biosynthesis; L-leucine from 3-methyl-2-oxobutanoate: step 1/4. Functionally, catalyzes the condensation of the acetyl group of acetyl-CoA with 3-methyl-2-oxobutanoate (2-ketoisovalerate) to form 3-carboxy-3-hydroxy-4-methylpentanoate (2-isopropylmalate). This chain is 2-isopropylmalate synthase, found in Polynucleobacter necessarius subsp. necessarius (strain STIR1).